Consider the following 409-residue polypeptide: Peptidase T (409 aa).

H78 contributes to the Zn(2+) binding site. Residue D80 is part of the active site. A Zn(2+)-binding site is contributed by D140. The Proton acceptor role is filled by E173. 3 residues coordinate Zn(2+): E174, D196, and H379.

This sequence belongs to the peptidase M20B family. The cofactor is Zn(2+).

It localises to the cytoplasm. The catalysed reaction is Release of the N-terminal residue from a tripeptide.. Functionally, cleaves the N-terminal amino acid of tripeptides. In Escherichia coli O139:H28 (strain E24377A / ETEC), this protein is Peptidase T.